An 857-amino-acid polypeptide reads, in one-letter code: uncharacterized protein (857 aa).

Disordered stretches follow at residues 316 to 339 (PPAPSLEQPENKTMPEIKEGTKEN), 484 to 561 (AKQP…PRTN), 619 to 777 (GQFP…PKPQ), and 809 to 836 (EQRPEREAMKRQAQQERENAVKNPSTGK). Basic and acidic residues-rich tracts occupy residues 324–339 (PENKTMPEIKEGTKEN), 518–534 (KKTEELKQSRNTAKAEE), and 630–640 (QRAESSIDKDC). The segment covering 683 to 700 (RTTTVQPHSHSAQPTTLR) has biased composition (polar residues). Positions 708-725 (SSSLIASAKPAPPISSSS) are enriched in low complexity. The span at 726-738 (TGPNVTNPNQSSA) shows a compositional bias: polar residues. The span at 809 to 828 (EQRPEREAMKRQAQQERENA) shows a compositional bias: basic and acidic residues.

This is an uncharacterized protein from Mus musculus (Mouse).